The following is a 255-amino-acid chain: uncharacterized protein (255 aa).

The region spanning 4 to 59 (RNERLNLIRKRVDQYGQVAVKDLAIFLQVTPETVRKDLETLENDKLITRTHGGAIQ) is the HTH deoR-type domain. The segment at residues 21–40 (VAVKDLAIFLQVTPETVRKD) is a DNA-binding region (H-T-H motif).

This is an uncharacterized protein from Staphylococcus epidermidis (strain ATCC 12228 / FDA PCI 1200).